We begin with the raw amino-acid sequence, 622 residues long: Basal cell adhesion molecule (622 aa).

The N-terminal stretch at 1-25 (MEPPDARAGLLWLTFLLSGYSGAQA) is a signal peptide. Ig-like V-type domains follow at residues 26–135 (ELHV…SSVR) and 140–250 (PEDT…HTFR). The Extracellular segment spans residues 26-541 (ELHVSVPPRV…GSVAPQTAQA (516 aa)). Cystine bridges form between Cys-47-Cys-118, Cys-165-Cys-230, and Cys-284-Cys-330. Ig-like C2-type domains are found at residues 267–342 (PSTT…EEVQ), 356–435 (PLEL…QSFQ), and 442–532 (PELK…FHFG). N-linked (GlcNAc...) asparagine glycosylation is found at Asn-314, Asn-323, Asn-370, and Asn-377. 2 disulfide bridges follow: Cys-378–Cys-418 and Cys-467–Cys-516. Residues 542–562 (GVAVMAVAVSVGLLLLVVAAF) traverse the membrane as a helical segment. Residues 563-622 (YCMRRKGRPGCCRRAEKGAPPAREPELSHSGSERPEHTGLLMGGPSGGGRGGSGGFGDEC) are Cytoplasmic-facing. The segment at 574 to 622 (CRRAEKGAPPAREPELSHSGSERPEHTGLLMGGPSGGGRGGSGGFGDEC) is disordered. The span at 575–599 (RRAEKGAPPAREPELSHSGSERPEH) shows a compositional bias: basic and acidic residues. A phosphoserine mark is found at Ser-590, Ser-592, Ser-594, and Ser-615. Over residues 603 to 622 (LMGGPSGGGRGGSGGFGDEC) the composition is skewed to gly residues.

Homodimer. Interacts with ITGA4:ITGB1. Interacts with spectrins SPTA1 and SPTB1. Post-translationally, epinephrine-stimulated phosphorylation of Ser-615 by PKA enhances adhesion to laminin. Ser-615 can also be phosphorylated by AKT1.

Its subcellular location is the cell membrane. Its function is as follows. Transmembrane glycoprotein that functions as both a receptor and an adhesion molecule playing a crucial role in cell adhesion, motility, migration and invasion. Extracellular domain enables binding to extracellular matrix proteins, such as laminin, integrin and other ligands while its intracellular domain interacts with cytoskeletal proteins like hemoglobin, facilitating cell signal transduction. Serves as a receptor for laminin alpha-5/LAMA5 to promote cell adhesion. Mechanistically, JAK2 induces BCAM phosphorylation and activates its adhesion to laminin by stimulating a Rap1/AKT signaling pathway in the absence of EPOR. The chain is Basal cell adhesion molecule (Bcam) from Mus musculus (Mouse).